A 68-amino-acid chain; its full sequence is Large ribosomal subunit protein uL30 (68 aa).

The protein belongs to the universal ribosomal protein uL30 family. Part of the 50S ribosomal subunit.

This is Large ribosomal subunit protein uL30 from Agrobacterium fabrum (strain C58 / ATCC 33970) (Agrobacterium tumefaciens (strain C58)).